The chain runs to 1157 residues: MTLQIIAGKSGTGKTTHLMDEVGKKIKKTSKTYIFIVPDQMTFQMETSFLNKESLSGMLGTQIFSFSRLAWKILQETGGLSKTFLSQTGIEMVIRKAALDQKDKLKIFSKATSRKGFYSELAKLFKEMKQEEVSVADLENSAINMSKSVTNKIHDISLIYQKYEELLAGKFLENEDYLRLLADKIIESDYLNQTEIIIDGFTSFSKQELTVIEKLMEKCDKVTVSLTLNVPEIQKGLEEYNMFKQSTEAYFALLEMAKLNKISVESDKLFLENKRAKSDSLAFLADVWGNNKFVTFEEKPQDLAIHQANNRRAEIEGIAREIRQLTLKGYRYQDMAILTRNISDYDVLCETVMESFDIPIFIDKKRAMAKHPFIEFIRSSIDAILFNWKYEPIFQAVKTEFFFDVSENTSIMRRKADILENYVLENGIQNKWKWEKEGDWIYRKIRGLSTNLLPQTDEELETQAIINEMRNLIVEPLSILENNLAKARTGTEFAMALYHFLEQVKAVEHLESWRQTAEENGYLELAREHEQAWSSVSELLDEFVEVLGEESLDINSFAEIVATGLDALEFSLLPPSLDQIVLSDMENAKLLDMKVIFAIGMNDGIMPLRQKDKGILSDQDRDSLRAENSNLKPSAKNNIGEEDLLAYKIISLPSDKLFLSYPAADEEGKVLSESNYLRKIKGQFKKLNEEVYLTDPSLLSDEEQSSYIRSKQATLGLLTSQLQMYKRGYPLSNVWWDAYNGYFEDTKESKVAKQVLSSLYYENKTKALHETTAKNLFGENIHASVSRMEKFFSCEFQHFAQYGLKLEERAHFKLQAVDMGEIFHGAMEWISAELKRNNQDWGNLTEEECRQMAKLAMTFLAPKIQHEILLSSKRMEYIQYKLLQIITRATTVLNEQAKSSAFRPIGLEVDFGLKGDIPSLKIPLKSESELLLQGRIDRIDVAEQDDRTFLRIIDYKSSSHDLALTEVYYGLALQMLTYLDIVVTNAQKMIGKTAEPAGVLYFHMHNQFVQADKELSDEAIAKELQKSSKMKGLILSDPVAVSLMDTSLEKGKSSNIIPAEIKQNGDLSARSRTATKEEFDKMRHFVRHKYQEAGNKILDGAVSINPYKLKERTPCQFCGFRSFCGFDPSLTSNQYRHLTNEKAENILTKMDIEGGTQ.

A UvrD-like helicase ATP-binding domain is found at 1–277; sequence MTLQIIAGKS…KLFLENKRAK (277 aa). 8-15 is a binding site for ATP; it reads GKSGTGKT. One can recognise a UvrD-like helicase C-terminal domain in the interval 272–578; sequence ENKRAKSDSL…EFSLLPPSLD (307 aa). Residues Cys794, Cys1115, Cys1118, and Cys1124 each coordinate [4Fe-4S] cluster.

This sequence belongs to the helicase family. AddB/RexB type 1 subfamily. In terms of assembly, heterodimer of AddA and AddB. Requires Mg(2+) as cofactor. [4Fe-4S] cluster serves as cofactor.

Its function is as follows. The heterodimer acts as both an ATP-dependent DNA helicase and an ATP-dependent, dual-direction single-stranded exonuclease. Recognizes the chi site generating a DNA molecule suitable for the initiation of homologous recombination. The AddB subunit has 5' -&gt; 3' nuclease activity but not helicase activity. This is ATP-dependent helicase/deoxyribonuclease subunit B from Listeria welshimeri serovar 6b (strain ATCC 35897 / DSM 20650 / CCUG 15529 / CIP 8149 / NCTC 11857 / SLCC 5334 / V8).